Reading from the N-terminus, the 289-residue chain is ATP synthase gamma chain (289 aa).

It belongs to the ATPase gamma chain family. In terms of assembly, F-type ATPases have 2 components, CF(1) - the catalytic core - and CF(0) - the membrane proton channel. CF(1) has five subunits: alpha(3), beta(3), gamma(1), delta(1), epsilon(1). CF(0) has three main subunits: a, b and c.

It localises to the cell inner membrane. In terms of biological role, produces ATP from ADP in the presence of a proton gradient across the membrane. The gamma chain is believed to be important in regulating ATPase activity and the flow of protons through the CF(0) complex. The sequence is that of ATP synthase gamma chain from Cereibacter sphaeroides (strain ATCC 17029 / ATH 2.4.9) (Rhodobacter sphaeroides).